Here is a 139-residue protein sequence, read N- to C-terminus: Arsenate reductase (139 aa).

Residues Cys10, Cys82, and Cys89 each act as nucleophile in the active site. 2 disulfide bridges follow: Cys10–Cys82 and Cys82–Cys89.

It belongs to the low molecular weight phosphotyrosine protein phosphatase family. Thioredoxin-coupled ArsC subfamily.

The protein localises to the cytoplasm. The enzyme catalyses arsenate + [thioredoxin]-dithiol + H(+) = arsenite + [thioredoxin]-disulfide + H2O. In terms of biological role, catalyzes the reduction of arsenate [As(V)] to arsenite [As(III)]. This is Arsenate reductase from Shouchella clausii (strain KSM-K16) (Alkalihalobacillus clausii).